Reading from the N-terminus, the 106-residue chain is MAQKKPKRNLSALKRHRQSLKRRLRNKAKKSAIKTLSKKAIQLAQEGKAEEALKIMRKAESLIDKAAKGSTLHKNAAARRKSRLMRKVRQLLEAAGAPLIGGGLSA.

The disordered stretch occupies residues Met1–Ala32.

Part of the 30S ribosomal subunit.

In terms of biological role, one of the primary rRNA binding proteins, it binds directly to 16S rRNA where it nucleates assembly of the bottom of the body of the 30S subunit, by binding to several RNA helices of the 16S rRNA. This Thermus thermophilus (strain ATCC 27634 / DSM 579 / HB8) protein is Small ribosomal subunit protein bS20 (rpsT).